A 598-amino-acid polypeptide reads, in one-letter code: Aspartate--tRNA(Asp/Asn) ligase (598 aa).

Residue E177 participates in L-aspartate binding. The segment at 201 to 204 (QIFK) is aspartate. L-aspartate is bound by residues R223 and H451. 223 to 225 (RDE) provides a ligand contact to ATP. Position 485 (E485) interacts with ATP. R492 is a binding site for L-aspartate. 537-540 (GVDR) contributes to the ATP binding site.

It belongs to the class-II aminoacyl-tRNA synthetase family. Type 1 subfamily. As to quaternary structure, homodimer.

It is found in the cytoplasm. It carries out the reaction tRNA(Asx) + L-aspartate + ATP = L-aspartyl-tRNA(Asx) + AMP + diphosphate. Its function is as follows. Aspartyl-tRNA synthetase with relaxed tRNA specificity since it is able to aspartylate not only its cognate tRNA(Asp) but also tRNA(Asn). Reaction proceeds in two steps: L-aspartate is first activated by ATP to form Asp-AMP and then transferred to the acceptor end of tRNA(Asp/Asn). In Anaplasma phagocytophilum (strain HZ), this protein is Aspartate--tRNA(Asp/Asn) ligase.